Consider the following 452-residue polypeptide: Protein phosphatase 1F (452 aa).

A PPM-type phosphatase domain is found at 153 to 410 (LVSIHAIRNT…DNITVMVVFL (258 aa)). 4 residues coordinate Mn(2+): aspartate 195, glycine 196, aspartate 357, and aspartate 401. At serine 452 the chain carries Phosphoserine.

It belongs to the PP2C family. As to quaternary structure, associates with FEM1B. The cofactor is Mg(2+). Mn(2+) is required as a cofactor. As to expression, expressed in the liver.

It catalyses the reaction O-phospho-L-seryl-[protein] + H2O = L-seryl-[protein] + phosphate. It carries out the reaction O-phospho-L-threonyl-[protein] + H2O = L-threonyl-[protein] + phosphate. In terms of biological role, dephosphorylates and concomitantly deactivates CaM-kinase II activated upon autophosphorylation, and CaM-kinases IV and I activated upon phosphorylation by CaM-kinase kinase. Promotes apoptosis. This Mus musculus (Mouse) protein is Protein phosphatase 1F (Ppm1f).